The primary structure comprises 402 residues: Plasminogen activator inhibitor 1 (402 aa).

Residues 1-22 (MQMSSALACLILGLVLVSGKGF) form the signal peptide. 3 N-linked (GlcNAc...) asparagine glycosylation sites follow: N232, N288, and N352.

This sequence belongs to the serpin family. Forms a heterodimer with TMPRSS7. Interacts with VTN. Binds LRP1B; binding is followed by internalization and degradation. Interacts with PPP1CB. In complex with PLAU/uPA, interacts with PLAUR/uPAR. Interacts with SORL1 and LRP1, either alone or in complex with PLAU; these interactions are abolished in the presence of LRPAP1/RAP. The ternary complex composed of PLAUR-PLAU-PAI1 also interacts with SORL1. Interacts with PLAT/tPA. Also interacts with SORL1, when complexed to PLAT/tPA.

Its subcellular location is the secreted. Functionally, serine protease inhibitor. Inhibits TMPRSS7. Is a primary inhibitor of tissue-type plasminogen activator (PLAT) and urokinase-type plasminogen activator (PLAU). As PLAT inhibitor, it is required for fibrinolysis down-regulation and is responsible for the controlled degradation of blood clots. As PLAU inhibitor, it is involved in the regulation of cell adhesion and spreading. Acts as a regulator of cell migration, independently of its role as protease inhibitor. It is required for stimulation of keratinocyte migration during cutaneous injury repair. Involved in cellular and replicative senescence. Plays a role in alveolar type 2 cells senescence in the lung. Is involved in the regulation of cementogenic differentiation of periodontal ligament stem cells, and regulates odontoblast differentiation and dentin formation during odontogenesis. In Mus musculus (Mouse), this protein is Plasminogen activator inhibitor 1 (Serpine1).